Reading from the N-terminus, the 244-residue chain is 5-oxoprolinase subunit A (244 aa).

Belongs to the LamB/PxpA family. In terms of assembly, forms a complex composed of PxpA, PxpB and PxpC.

The enzyme catalyses 5-oxo-L-proline + ATP + 2 H2O = L-glutamate + ADP + phosphate + H(+). Catalyzes the cleavage of 5-oxoproline to form L-glutamate coupled to the hydrolysis of ATP to ADP and inorganic phosphate. The protein is 5-oxoprolinase subunit A of Shigella dysenteriae serotype 1 (strain Sd197).